The sequence spans 1550 residues: Protein TIME FOR COFFEE (1550 aa).

Disordered regions lie at residues 1–191, 207–304, 325–505, 708–736, 779–805, 859–1023, 1086–1130, 1163–1196, 1213–1296, and 1321–1435; these read MDRN…PVSP, VPRK…PVAV, TSKQ…SERG, QGSV…TAQR, RPPN…SATP, FNGS…KAGV, ASLE…QSIA, ALPQ…SQQP, AASA…SVAA, and NSKP…PKHG. Over residues 43 to 80 the composition is skewed to basic and acidic residues; sequence EAARLRDRGGSNKKDRDRERDRDRERERERDRERDRLN. The span at 100 to 118 shows a compositional bias: acidic residues; that stretch reads DGGDDSSEESVNDDEEYDD. Positions 134–151 are enriched in low complexity; that stretch reads SNNISAASFSSSLSNHHN. The segment covering 157–171 has biased composition (basic residues); sequence LHHHHHSHNNNHQRK. Residues 241 to 250 are compositionally biased toward polar residues; it reads RQISSTSPAN. The span at 292 to 301 shows a compositional bias: low complexity; the sequence is KSSSSKLSSP. The segment covering 348-366 has biased composition (polar residues); it reads RVSSPISNPQTLPQSSITL. The segment covering 367–379 has biased composition (low complexity); sequence AANSSSSNVSAIA. Residues 409 to 432 show a composition bias toward polar residues; that stretch reads SKSQVPFSNQLKSSGSGEGNSSVL. 2 stretches are compositionally biased toward basic and acidic residues: residues 447–461 and 473–490; these read DSEK…DETI and SDGE…KFEI. Composition is skewed to polar residues over residues 713 to 736, 783 to 803, and 884 to 992; these read GRSS…TAQR, SGIT…SASA, and LTGQ…NLGL. Gly residues predominate over residues 1112–1126; the sequence is SGGGAIGKTSGGNGG. A compositionally biased stretch (polar residues) spans 1164–1173; the sequence is LPQSSGSLPT. The span at 1174–1195 shows a compositional bias: low complexity; sequence SHHQQLLQQQQQQHMQRSQSQQ. The segment covering 1234-1253 has biased composition (polar residues); the sequence is NMTTSPAGTTKFANANSGFP. The segment covering 1254-1273 has biased composition (low complexity); it reads QNLVQSSSNQVQSQQWKNNS. 3 stretches are compositionally biased toward polar residues: residues 1274 to 1296, 1321 to 1342, and 1351 to 1360; these read PRTT…SVAA, NSKP…NHQA, and SPSTSSVSKN. The segment covering 1361–1382 has biased composition (low complexity); it reads ASGSPRTTASASSAANKGGQAS. Composition is skewed to polar residues over residues 1383-1397 and 1405-1419; these read TTTH…NLQP and GGRN…NPTT. Residues 1420-1435 show a composition bias toward low complexity; it reads SSGSKSQQQQQLPKHG.

As to quaternary structure, interacts with MYC2.

It localises to the nucleus. Functionally, regulator of normal clock function. Acts in the mid to late night. Contributes to the amplitude of circadian clocks. May act on the transcriptional induction of LATE ELONGATED HYPOCOTYL (LHY). Inhibits MYC2 protein accumulation, acting as a negative factor in the JA-signaling pathway. This is Protein TIME FOR COFFEE (TIC) from Arabidopsis thaliana (Mouse-ear cress).